The primary structure comprises 235 residues: N,O-diacetylmuramidase (235 aa).

The first 17 residues, 1–17 (MKLSLLTVAAAAGAAVA), serve as a signal peptide directing secretion. The region spanning 29–235 (SVQGFDISGY…DQLQRFAKGG (207 aa)) is the Ch-type lysozyme domain. Residues Asp34, Asp122, and Glu124 contribute to the active site. Residues Cys132 and Cys171 are joined by a disulfide bond.

The protein belongs to the glycosyl hydrolase 25 family.

The protein localises to the secreted. The catalysed reaction is Hydrolysis of (1-&gt;4)-beta-linkages between N-acetylmuramic acid and N-acetyl-D-glucosamine residues in a peptidoglycan and between N-acetyl-D-glucosamine residues in chitodextrins.. This enzyme has both lysozyme (acetylmuramidase) and diacetylmuramidase activities. In Arthroderma benhamiae (strain ATCC MYA-4681 / CBS 112371) (Trichophyton mentagrophytes), this protein is N,O-diacetylmuramidase.